A 407-amino-acid polypeptide reads, in one-letter code: Biotin synthase (407 aa).

Residues 47–277 enclose the Radical SAM core domain; sequence WFGRRVKLNY…DVEVRIAGGR (231 aa). Residues C65, C69, and C72 each coordinate [4Fe-4S] cluster. Positions 109, 142, 202, and 272 each coordinate [2Fe-2S] cluster. The disordered stretch occupies residues 368-407; the sequence is GGGVCAPAPAATTPRPAEEPRTDLVAVRRRGAGTDLAPNA. The span at 373–382 shows a compositional bias: low complexity; the sequence is APAPAATTPR.

This sequence belongs to the radical SAM superfamily. Biotin synthase family. In terms of assembly, homodimer. It depends on [4Fe-4S] cluster as a cofactor. [2Fe-2S] cluster is required as a cofactor.

It carries out the reaction (4R,5S)-dethiobiotin + (sulfur carrier)-SH + 2 reduced [2Fe-2S]-[ferredoxin] + 2 S-adenosyl-L-methionine = (sulfur carrier)-H + biotin + 2 5'-deoxyadenosine + 2 L-methionine + 2 oxidized [2Fe-2S]-[ferredoxin]. The protein operates within cofactor biosynthesis; biotin biosynthesis; biotin from 7,8-diaminononanoate: step 2/2. Its function is as follows. Catalyzes the conversion of dethiobiotin (DTB) to biotin by the insertion of a sulfur atom into dethiobiotin via a radical-based mechanism. In Streptomyces coelicolor (strain ATCC BAA-471 / A3(2) / M145), this protein is Biotin synthase.